The chain runs to 521 residues: Aspartic proteinase yapsin-1 (521 aa).

A signal peptide spans 1–17; sequence MRIWILIFFSFIKLVSS. At 18 to 500 the chain is on the extracellular side; it reads LQYTGNGVLA…NAVANAGNSF (483 aa). In terms of domain architecture, Peptidase A1 spans 67 to 409; that stretch reads YTTTLSIGRP…HQSQKMIAIG (343 aa). Aspartate 85 is a catalytic residue. N-linked (GlcNAc...) asparagine glycans are attached at residues asparagine 136, asparagine 157, asparagine 250, asparagine 289, asparagine 295, asparagine 354, asparagine 414, asparagine 418, asparagine 460, and asparagine 484. Residues 501–521 form a helical membrane-spanning segment; that stretch reads SPLSAMVIMMMSAVFLGLGII.

It belongs to the peptidase A1 family.

The protein localises to the endoplasmic reticulum membrane. It is found in the secreted. Its subcellular location is the cell wall. Functionally, cleaves at paired basic residues. The chain is Aspartic proteinase yapsin-1 (yps1) from Schizosaccharomyces pombe (strain 972 / ATCC 24843) (Fission yeast).